Here is a 329-residue protein sequence, read N- to C-terminus: Replication factor C small subunit 1 (329 aa).

G44–T51 contributes to the ATP binding site.

It belongs to the activator 1 small subunits family. RfcS subfamily. In terms of assembly, heteromultimer composed of small subunits (RfcS) and large subunits (RfcL).

Functionally, part of the RFC clamp loader complex which loads the PCNA sliding clamp onto DNA. This Pyrobaculum aerophilum (strain ATCC 51768 / DSM 7523 / JCM 9630 / CIP 104966 / NBRC 100827 / IM2) protein is Replication factor C small subunit 1.